Reading from the N-terminus, the 178-residue chain is Large ribosomal subunit protein uL6 (178 aa).

This sequence belongs to the universal ribosomal protein uL6 family. In terms of assembly, part of the 50S ribosomal subunit.

Functionally, this protein binds to the 23S rRNA, and is important in its secondary structure. It is located near the subunit interface in the base of the L7/L12 stalk, and near the tRNA binding site of the peptidyltransferase center. This chain is Large ribosomal subunit protein uL6, found in Helicobacter pylori (strain Shi470).